The primary structure comprises 179 residues: Inosine/xanthosine triphosphatase (179 aa).

Mg(2+) is bound at residue glutamate 71. 71 to 72 (EA) provides a ligand contact to substrate.

Belongs to the YjjX NTPase family. As to quaternary structure, homodimer. Mg(2+) serves as cofactor. Mn(2+) is required as a cofactor.

It catalyses the reaction XTP + H2O = XDP + phosphate + H(+). The enzyme catalyses ITP + H2O = IDP + phosphate + H(+). Functionally, phosphatase that hydrolyzes non-canonical purine nucleotides such as XTP and ITP to their respective diphosphate derivatives. Probably excludes non-canonical purines from DNA/RNA precursor pool, thus preventing their incorporation into DNA/RNA and avoiding chromosomal lesions. This chain is Inosine/xanthosine triphosphatase, found in Shewanella oneidensis (strain ATCC 700550 / JCM 31522 / CIP 106686 / LMG 19005 / NCIMB 14063 / MR-1).